Reading from the N-terminus, the 603-residue chain is Polypeptide N-acetylgalactosaminyltransferase 9 (603 aa).

At Met1 to Lys6 the chain is on the cytoplasmic side. A helical; Signal-anchor for type II membrane protein transmembrane segment spans residues Ile7–Arg29. The Lumenal portion of the chain corresponds to Leu30–His603. Cystine bridges form between Cys141–Cys372 and Cys363–Cys442. The tract at residues Leu150–Arg261 is catalytic subdomain A. Substrate is bound by residues Asp191 and Arg222. 3 residues coordinate Mn(2+): Asp245, His247, and His377. Residues Pro318–Arg380 are catalytic subdomain B. Residues Arg380 and Tyr385 each contribute to the substrate site. A glycan (N-linked (GlcNAc...) asparagine) is linked at Asn460. Residues Thr464 to His600 form the Ricin B-type lectin domain. Intrachain disulfides connect Cys477/Cys493, Cys525/Cys540, and Cys567/Cys587.

It belongs to the glycosyltransferase 2 family. GalNAc-T subfamily. Requires Mn(2+) as cofactor. Specifically expressed in brain. Not expressed in heart, placenta, lung, liver, skeletal muscle, kidney, pancreas, spleen, thymus, prostate, testis, ovary, small intestine, colon and leukocyte. In brain, it is expressed in cerebellum, frontal lobe, temporal lobe, putamen and spinal cord, weakly expressed in cerebral cortex. Not expressed in medulla and occipital pole.

The protein resides in the golgi apparatus membrane. The catalysed reaction is L-seryl-[protein] + UDP-N-acetyl-alpha-D-galactosamine = a 3-O-[N-acetyl-alpha-D-galactosaminyl]-L-seryl-[protein] + UDP + H(+). It carries out the reaction L-threonyl-[protein] + UDP-N-acetyl-alpha-D-galactosamine = a 3-O-[N-acetyl-alpha-D-galactosaminyl]-L-threonyl-[protein] + UDP + H(+). It participates in protein modification; protein glycosylation. Its function is as follows. Catalyzes the initial reaction in O-linked oligosaccharide biosynthesis, the transfer of an N-acetyl-D-galactosamine residue to a serine or threonine residue on the protein receptor. Does not glycosylate apomucin or SDC3. The sequence is that of Polypeptide N-acetylgalactosaminyltransferase 9 (GALNT9) from Homo sapiens (Human).